A 95-amino-acid chain; its full sequence is FXYD domain-containing ion transport regulator 6 (95 aa).

An N-terminal signal peptide occupies residues 1 to 18 (MELVLVFLCSLLAPMVLA). The Extracellular portion of the chain corresponds to 19–35 (STAEKEKEMDPFHYDYQ). A helical membrane pass occupies residues 36–58 (TLRIGGLVFAVVLFSVGILLILS). The Cytoplasmic segment spans residues 59–95 (RRCKCSFNQKPRAPGDEEAQVENLITANATEPQKAEN).

The protein belongs to the FXYD family. In terms of assembly, regulatory subunit of the sodium/potassium-transporting ATPase which is composed of a catalytic alpha subunit, a non-catalytic beta subunit and an additional regulatory subunit. The regulatory subunit, a member of the FXYD protein family, modulates the enzymatic activity in a tissue- and isoform-specific way by changing affinities of the Na+/K+-ATPase toward Na(+), K(+) or ATP.

The protein localises to the cell membrane. Associates with and regulates the activity of the sodium/potassium-transporting ATPase (NKA) which catalyzes the hydrolysis of ATP coupled with the exchange of Na(+) and K(+) ions across the plasma membrane. Reduces the apparent affinity for intracellular Na(+) with no change in the apparent affinity for extracellular K(+). In addition to modulating NKA kinetics, may also function as a regulator of NKA localization to the plasma membrane. In Macaca fascicularis (Crab-eating macaque), this protein is FXYD domain-containing ion transport regulator 6 (FXYD6).